The chain runs to 202 residues: MADVTLSRTGQVSRKTNETAVSVSVNIDGTGVSKIATGVGFFDHMLDQLARHSLIDMEIKTEGDLHVDDHHTVEDTGIAIGQAIAKALGDRRGITRYASLDLAMDETMTRAAVDVSGRPFLVWNVTFSSPKIGTFDTELVREFFQALAQHAGITLHVQNIYGANNHHVAETCFKSVARVLRTATEIDPRQAGRVPSTKGTLA.

The protein belongs to the imidazoleglycerol-phosphate dehydratase family.

It is found in the cytoplasm. It carries out the reaction D-erythro-1-(imidazol-4-yl)glycerol 3-phosphate = 3-(imidazol-4-yl)-2-oxopropyl phosphate + H2O. It participates in amino-acid biosynthesis; L-histidine biosynthesis; L-histidine from 5-phospho-alpha-D-ribose 1-diphosphate: step 6/9. The protein is Imidazoleglycerol-phosphate dehydratase of Sinorhizobium fredii (strain NBRC 101917 / NGR234).